The primary structure comprises 337 residues: Viral cathepsin (337 aa).

An N-terminal signal peptide occupies residues 1–16 (MNKLLILFLLLNAALT). A propeptide spans 17–126 (RQDNHASANN…VVDGPAQRQR (110 aa)) (activation peptide). Disulfide bonds link Cys147–Cys188, Cys181–Cys221, and Cys276–Cys324. Residue Cys150 is part of the active site. Active-site residues include His283 and Asn303.

It belongs to the peptidase C1 family. Synthesized as an inactive proenzyme and activated by proteolytic removal of the inhibitory propeptide.

The enzyme catalyses Endopeptidase of broad specificity, hydrolyzing substrates of both cathepsin L and cathepsin B.. In terms of biological role, cysteine protease that plays an essential role in host liquefaction to facilitate horizontal transmission of the virus. May participate in the degradation of foreign protein expressed by the baculovirus system. In Lepidoptera (butterflies and moths), this protein is Viral cathepsin (VCATH).